Here is a 302-residue protein sequence, read N- to C-terminus: Nucleotide-binding protein SERP0433 (302 aa).

Residue 18–25 (GMSGAGKS) coordinates ATP. A GTP-binding site is contributed by 69–72 (DLRG).

The protein belongs to the RapZ-like family.

Functionally, displays ATPase and GTPase activities. The polypeptide is Nucleotide-binding protein SERP0433 (Staphylococcus epidermidis (strain ATCC 35984 / DSM 28319 / BCRC 17069 / CCUG 31568 / BM 3577 / RP62A)).